The chain runs to 369 residues: S-adenosyl-L-methionine-dependent uroporphyrinogen III methyltransferase, chloroplastic (369 aa).

The transit peptide at Met1–Cys28 directs the protein to the chloroplast. S-adenosyl-L-homocysteine contacts are provided by residues Pro124, Gly200 to Asp202, Thr230 to Ala231, Met284, and Thr341.

The protein belongs to the precorrin methyltransferase family. As to expression, mostly expressed in leaves, and, to a lower extent, in stems, flowers and siliques.

The protein resides in the plastid. It is found in the chloroplast. It carries out the reaction uroporphyrinogen III + 2 S-adenosyl-L-methionine = precorrin-2 + 2 S-adenosyl-L-homocysteine + H(+). It functions in the pathway porphyrin-containing compound metabolism; siroheme biosynthesis; precorrin-2 from uroporphyrinogen III: step 1/1. Functionally, essential protein required for siroheme biosynthesis. Catalyzes the two successive C-2 and C-7 methylation reactions involved in the conversion of uroporphyrinogen III to precorrin-2 via the intermediate formation of precorrin-1. It is a step in the biosynthesis of siroheme. Promotes nitrogen and sulfur assimilation as well as photosynthesis efficiency by triggering chlorophyll, nitrite reductase (NiR) and sulfite reductase (SiR) biosynthesis. The protein is S-adenosyl-L-methionine-dependent uroporphyrinogen III methyltransferase, chloroplastic of Arabidopsis thaliana (Mouse-ear cress).